A 369-amino-acid chain; its full sequence is MVVVNGYKQNENEKKLNVLNLDQLEKQAKEIIPTGGFGYISGGSEDEWTLRENRRAFTHKQIVPRALTNIEKPELETNVFGIPLKTPLFMVPAAAQGLAHVKGEVDTAKGVAAVGGLMAQSTYSSTSIADTAASGTGAPQFFQLYMSKDWDFNEALLDEAKRAGVKGIILTVDATVDGYREADIINNFQFPIPMANLTKYSEDDGQGKGIAEIYASAAQKIGSDDVARIANYTDLPVIVKGIESPEDALYAIGAGASGIYVSNHGGRQLNGGPASFDVLEDVAKAVNGKVPVIFDSGIRRGSDVFKALASGADLVGIGRPVIYGLALGGAQGVQSVFEHLDHELEIIMQLAGTKTISDVKNAKLLNIRY.

The FMN hydroxy acid dehydrogenase domain occupies 13–369 (EKKLNVLNLD…KNAKLLNIRY (357 aa)). Tyr-39 provides a ligand contact to pyruvate. Residues 92–94 (PAA), Ser-121, and Gln-143 contribute to the FMN site. Tyr-145 contributes to the pyruvate binding site. Position 171 (Thr-171) interacts with FMN. Residue Arg-180 participates in pyruvate binding. Positions 240 and 262 each coordinate FMN. Residues His-264 and Arg-267 each contribute to the pyruvate site. His-264 functions as the Proton acceptor in the catalytic mechanism. Residues 295–299 (DSGIR) and Arg-319 each bind FMN.

Belongs to the FMN-dependent alpha-hydroxy acid dehydrogenase family. In terms of assembly, homotetramer. FMN serves as cofactor.

The enzyme catalyses (S)-lactate + O2 = pyruvate + H2O2. Functionally, catalyzes the oxidation of (S)-lactate (L-lactate) to pyruvate, with a reduction of O2 to H2O2. May be involved in the utilization of L-lactate as an energy source for growth. In Lentilactobacillus hilgardii (strain ATCC 8290 / DSM 20176 / CCUG 30140 / JCM 1155 / KCTC 3500 / NBRC 15886 / NCIMB 8040 / NRRL B-1843 / 9), this protein is L-lactate oxidase.